The sequence spans 587 residues: Trans-activating transcriptional regulatory protein (587 aa).

It belongs to the nucleopolyhedrovirus IE-1 protein family.

In terms of biological role, regulatory transcriptional protein, which trans-activates gene expression from early baculovirus promoters. Can also trans-activate its own promoter, suggesting that it is autoregulated during normal infection of insect cells. This chain is Trans-activating transcriptional regulatory protein (IE1), found in Bombyx mori nuclear polyhedrosis virus (BmNPV).